We begin with the raw amino-acid sequence, 66 residues long: Cytoplasmic envelopment protein 3 (66 aa).

G2 carries the N-myristoyl glycine; by host lipid modification.

This sequence belongs to the herpesviridae cytoplasmic envelopment protein 3 family. In terms of assembly, interacts with cytoplasmic envelopment protein 2; this interaction is essential for the proper localization of each protein to the assembly complex and thus for the production of infectious virus. Phosphorylated. Phosphorylation does not seem to be required for recycling to the host Golgi apparatus. Packaging is selective for underphosphorylated forms.

The protein resides in the virion tegument. The protein localises to the virion membrane. It localises to the host cell membrane. Its subcellular location is the host Golgi apparatus membrane. In terms of biological role, plays an important role in the cytoplasmic envelopment of tegument proteins and capsids during the assembly and egress processes. Also participates in viral entry at the fusion step probably by regulating the core fusion machinery. The chain is Cytoplasmic envelopment protein 3 (38) from Saimiriine herpesvirus 2 (strain 11) (SaHV-2).